The primary structure comprises 409 residues: MKRVFLMILDSLGIGSSVDACKFNDSGADTLGHIAEKCFFNEANVQRRGSLYIPNLIKLGIVKSYQSSTGKYLLGFNQKEDANIIASYGYASELSSGKDTTSGHWEIAGAPFLKDWYYFKEKDNSFPSSLINKIITKLKLPGILGNCHASGTEIIKILGEEHIKTGKPIFYTSCDSVFQIACHEIKFGLSNLYKICENIREILDQNKYQVARVIARPFIGTNKSNFNRTGNRRDISMKPLSITFMEKLIQEKQGKVIAIGKISDIYAGVGISKNIKSTGLYELCHTTIHQMKSAKNNTVIFTNFVDFDSVWGHRRDVSGYAKGLEFFDSKLSEMIDLVKEGDLFILTADHGCDPTWKGTDHTRENVPILIYSPGEEIKFLGHRDTFSDIGQTIAKYFSLSDMKYGKSMF.

Positions 10, 308, 313, 349, 350, and 361 each coordinate Mn(2+).

The protein belongs to the phosphopentomutase family. The cofactor is Mn(2+).

It is found in the cytoplasm. It catalyses the reaction 2-deoxy-alpha-D-ribose 1-phosphate = 2-deoxy-D-ribose 5-phosphate. The enzyme catalyses alpha-D-ribose 1-phosphate = D-ribose 5-phosphate. Its pathway is carbohydrate degradation; 2-deoxy-D-ribose 1-phosphate degradation; D-glyceraldehyde 3-phosphate and acetaldehyde from 2-deoxy-alpha-D-ribose 1-phosphate: step 1/2. Its function is as follows. Isomerase that catalyzes the conversion of deoxy-ribose 1-phosphate (dRib-1-P) and ribose 1-phosphate (Rib-1-P) to deoxy-ribose 5-phosphate (dRib-5-P) and ribose 5-phosphate (Rib-5-P), respectively. The chain is Phosphopentomutase from Buchnera aphidicola subsp. Schizaphis graminum (strain Sg).